A 714-amino-acid chain; its full sequence is Polyribonucleotide nucleotidyltransferase (714 aa).

Mg(2+) contacts are provided by Asp488 and Asp494. The 60-residue stretch at 555-614 (PRIEVMNIPTDKIRDVIGSGGKVIREIVEKTGAKINIEDDGTVKIASSNGKEIEAAKKWI) folds into the KH domain. One can recognise an S1 motif domain in the interval 624–692 (GEIYEGTVVK…ERGKVRLSMK (69 aa)).

This sequence belongs to the polyribonucleotide nucleotidyltransferase family. It depends on Mg(2+) as a cofactor.

It is found in the cytoplasm. It catalyses the reaction RNA(n+1) + phosphate = RNA(n) + a ribonucleoside 5'-diphosphate. In terms of biological role, involved in mRNA degradation. Catalyzes the phosphorolysis of single-stranded polyribonucleotides processively in the 3'- to 5'-direction. This Brucella abortus biovar 1 (strain 9-941) protein is Polyribonucleotide nucleotidyltransferase.